The primary structure comprises 122 residues: MPKYFCDYCDTYLTHDSPSVRKTHCSGRKHKDNVKMYYQTWMEEQAQELIDKTTQAFQKGKMGNFGGLPPNGMMMGPRGPMPMMPMMPVRPMGMGGMLPMRPVPPAMMGGGQVMMMGPRPGM.

A Matrin-type zinc finger spans residues 4–36 (YFCDYCDTYLTHDSPSVRKTHCSGRKHKDNVKM).

The protein belongs to the U1 small nuclear ribonucleoprotein C family. U1 snRNP is composed of the 7 core Sm proteins B/B', D1, D2, D3, E, F and G that assemble in a heptameric protein ring on the Sm site of the small nuclear RNA to form the core snRNP, and at least 3 U1 snRNP-specific proteins U1-70K, U1-A and U1-C. U1-C interacts with U1 snRNA and the 5' splice-site region of the pre-mRNA.

The protein resides in the nucleus. Functionally, component of the spliceosomal U1 snRNP, which is essential for recognition of the pre-mRNA 5' splice-site and the subsequent assembly of the spliceosome. U1-C is directly involved in initial 5' splice-site recognition for both constitutive and regulated alternative splicing. The interaction with the 5' splice-site seems to precede base-pairing between the pre-mRNA and the U1 snRNA. Stimulates commitment or early (E) complex formation by stabilizing the base pairing of the 5' end of the U1 snRNA and the 5' splice-site region. This is U1 small nuclear ribonucleoprotein C from Ciona intestinalis (Transparent sea squirt).